A 218-amino-acid polypeptide reads, in one-letter code: Pyrrolidone-carboxylate peptidase 2 (218 aa).

Catalysis depends on residues Glu83, Cys146, and His170.

The protein belongs to the peptidase C15 family. As to quaternary structure, homotetramer.

Its subcellular location is the cytoplasm. The catalysed reaction is Release of an N-terminal pyroglutamyl group from a polypeptide, the second amino acid generally not being Pro.. Its function is as follows. Removes 5-oxoproline from various penultimate amino acid residues except L-proline. This is Pyrrolidone-carboxylate peptidase 2 from Photorhabdus laumondii subsp. laumondii (strain DSM 15139 / CIP 105565 / TT01) (Photorhabdus luminescens subsp. laumondii).